A 323-amino-acid chain; its full sequence is MILNTLNSLKIVFAGTDKFSKDHLKILVTNTTHKILGVITKPDQPLGRGKQITSSLTKKLAKKLKIPVFQPTALNTSTFYNQIYNLNADIIIVVSYGKIIPQLILNIFPLGGINVHTSLLPRWRGPSPIQSALLNGDKLTGITIIKMNNNIDTGDIIYSSSCIINKSDTSVTLQNKLKILSCQGLIQVLKNFKSSYFPIRQSNLATYSNKINKEDAKLIWLKSAIQLERSIRAYNPWPICYFKINNQLSIKVWSANVIIHFNQHKYQIGEIILINKHGMQIKTSKNILNITTVQLPGKKIMHANNLCNSKNKWCIPGTKLTNT.

Residue 118–121 participates in (6S)-5,6,7,8-tetrahydrofolate binding; the sequence is SLLP.

Belongs to the Fmt family.

It catalyses the reaction L-methionyl-tRNA(fMet) + (6R)-10-formyltetrahydrofolate = N-formyl-L-methionyl-tRNA(fMet) + (6S)-5,6,7,8-tetrahydrofolate + H(+). Its function is as follows. Attaches a formyl group to the free amino group of methionyl-tRNA(fMet). The formyl group appears to play a dual role in the initiator identity of N-formylmethionyl-tRNA by promoting its recognition by IF2 and preventing the misappropriation of this tRNA by the elongation apparatus. The sequence is that of Methionyl-tRNA formyltransferase from Buchnera aphidicola subsp. Baizongia pistaciae (strain Bp).